The sequence spans 408 residues: Glucose-1-phosphate adenylyltransferase (408 aa).

Alpha-D-glucose 1-phosphate contacts are provided by residues Tyr-100, Gly-165, 180 to 181 (EK), and Ser-198.

Belongs to the bacterial/plant glucose-1-phosphate adenylyltransferase family. As to quaternary structure, homotetramer.

It catalyses the reaction alpha-D-glucose 1-phosphate + ATP + H(+) = ADP-alpha-D-glucose + diphosphate. The protein operates within glycan biosynthesis; glycogen biosynthesis. Its function is as follows. Involved in the biosynthesis of ADP-glucose, a building block required for the elongation reactions to produce glycogen. Catalyzes the reaction between ATP and alpha-D-glucose 1-phosphate (G1P) to produce pyrophosphate and ADP-Glc. The polypeptide is Glucose-1-phosphate adenylyltransferase (Cutibacterium acnes (strain DSM 16379 / KPA171202) (Propionibacterium acnes)).